Reading from the N-terminus, the 245-residue chain is U21-ctenitoxin-Pn1a (245 aa).

Positions 1 to 245 (IVYGTVTTPG…FRSWMDKVMT (245 aa)) constitute a Peptidase S1 domain. An intrachain disulfide couples Cys-30 to Cys-46. Catalysis depends on charge relay system residues His-45 and Asp-95. 2 disulfide bridges follow: Cys-161/Cys-183 and Cys-192/Cys-221. Ser-196 serves as the catalytic Charge relay system.

In terms of tissue distribution, expressed by the venom gland.

The protein localises to the secreted. Functionally, protease. Hydrolyzes gelatin and succinyl casein. The chain is U21-ctenitoxin-Pn1a from Phoneutria nigriventer (Brazilian armed spider).